The sequence spans 91 residues: Small ribosomal subunit protein uS19 (91 aa).

Belongs to the universal ribosomal protein uS19 family.

Its function is as follows. Protein S19 forms a complex with S13 that binds strongly to the 16S ribosomal RNA. The protein is Small ribosomal subunit protein uS19 of Ectopseudomonas mendocina (strain ymp) (Pseudomonas mendocina).